Reading from the N-terminus, the 287-residue chain is 4-hydroxybenzoate octaprenyltransferase (287 aa).

The next 8 membrane-spanning stretches (helical) occupy residues 21–39 (PIGT…WLAA), 95–115 (VLAL…TMNP), 116–136 (LTIG…FMKR), 138–158 (IPIP…MAYA), 161–181 (ANAL…WTIA), 213–233 (IIGA…QLSE), 234–251 (LGSS…LFVY), and 264–284 (CFQA…GVVI).

It belongs to the UbiA prenyltransferase family. Mg(2+) serves as cofactor.

Its subcellular location is the cell inner membrane. It carries out the reaction all-trans-octaprenyl diphosphate + 4-hydroxybenzoate = 4-hydroxy-3-(all-trans-octaprenyl)benzoate + diphosphate. It participates in cofactor biosynthesis; ubiquinone biosynthesis. Functionally, catalyzes the prenylation of para-hydroxybenzoate (PHB) with an all-trans polyprenyl group. Mediates the second step in the final reaction sequence of ubiquinone-8 (UQ-8) biosynthesis, which is the condensation of the polyisoprenoid side chain with PHB, generating the first membrane-bound Q intermediate 3-octaprenyl-4-hydroxybenzoate. The sequence is that of 4-hydroxybenzoate octaprenyltransferase from Aeromonas hydrophila subsp. hydrophila (strain ATCC 7966 / DSM 30187 / BCRC 13018 / CCUG 14551 / JCM 1027 / KCTC 2358 / NCIMB 9240 / NCTC 8049).